A 512-amino-acid chain; its full sequence is 2-isopropylmalate synthase (512 aa).

One can recognise a Pyruvate carboxyltransferase domain in the interval 5–268 (LIIFDTTLRD…DLGIATQHIL (264 aa)). Positions 14, 202, 204, and 239 each coordinate Mn(2+). The regulatory domain stretch occupies residues 394-512 (GFVSLFQQSE…NKADRVAAQG (119 aa)).

The protein belongs to the alpha-IPM synthase/homocitrate synthase family. LeuA type 1 subfamily. As to quaternary structure, homodimer. Mn(2+) is required as a cofactor.

The protein resides in the cytoplasm. The catalysed reaction is 3-methyl-2-oxobutanoate + acetyl-CoA + H2O = (2S)-2-isopropylmalate + CoA + H(+). It participates in amino-acid biosynthesis; L-leucine biosynthesis; L-leucine from 3-methyl-2-oxobutanoate: step 1/4. Catalyzes the condensation of the acetyl group of acetyl-CoA with 3-methyl-2-oxobutanoate (2-ketoisovalerate) to form 3-carboxy-3-hydroxy-4-methylpentanoate (2-isopropylmalate). The sequence is that of 2-isopropylmalate synthase from Verminephrobacter eiseniae (strain EF01-2).